We begin with the raw amino-acid sequence, 84 residues long: Probable cyclin-dependent kinases regulatory subunit (84 aa).

Belongs to the CKS family. As to quaternary structure, monomer in solution; may form a homohexamer that can probably bind six kinase subunits.

Its function is as follows. Binds to the catalytic subunit of the cyclin dependent kinases and is essential for their biological function. The chain is Probable cyclin-dependent kinases regulatory subunit from Physarum polycephalum (Slime mold).